Here is a 259-residue protein sequence, read N- to C-terminus: Deoxyribose-phosphate aldolase (259 aa).

Catalysis depends on D102, which acts as the Proton donor/acceptor. K167 (schiff-base intermediate with acetaldehyde) is an active-site residue. K201 functions as the Proton donor/acceptor in the catalytic mechanism.

Belongs to the DeoC/FbaB aldolase family. DeoC type 2 subfamily.

It localises to the cytoplasm. It catalyses the reaction 2-deoxy-D-ribose 5-phosphate = D-glyceraldehyde 3-phosphate + acetaldehyde. It functions in the pathway carbohydrate degradation; 2-deoxy-D-ribose 1-phosphate degradation; D-glyceraldehyde 3-phosphate and acetaldehyde from 2-deoxy-alpha-D-ribose 1-phosphate: step 2/2. In terms of biological role, catalyzes a reversible aldol reaction between acetaldehyde and D-glyceraldehyde 3-phosphate to generate 2-deoxy-D-ribose 5-phosphate. The protein is Deoxyribose-phosphate aldolase of Salmonella typhi.